Consider the following 223-residue polypeptide: Putative oxidoreductase MT1904 (223 aa).

Position 4–28 (4–28 (LVTGGDTDLGRTMAEGFRNDGHKVT)) interacts with NADP(+). A substrate-binding site is contributed by Ser128.

Belongs to the short-chain dehydrogenases/reductases (SDR) family.

This is Putative oxidoreductase MT1904 from Mycobacterium tuberculosis (strain CDC 1551 / Oshkosh).